Consider the following 742-residue polypeptide: Phosphoribosylformylglycinamidine synthase subunit PurL (742 aa).

Residue His-53 is part of the active site. 2 residues coordinate ATP: Tyr-56 and Lys-95. Residue Glu-97 participates in Mg(2+) binding. Substrate is bound by residues 98–101 and Arg-120; that span reads SHNH. His-99 serves as the catalytic Proton acceptor. Residue Asp-121 participates in Mg(2+) binding. Gln-244 provides a ligand contact to substrate. Mg(2+) is bound at residue Asp-274. 318-320 lines the substrate pocket; the sequence is ESQ. ATP contacts are provided by Asp-501 and Gly-538. Asn-539 provides a ligand contact to Mg(2+). Ser-541 provides a ligand contact to substrate.

It belongs to the FGAMS family. Monomer. Part of the FGAM synthase complex composed of 1 PurL, 1 PurQ and 2 PurS subunits.

The protein localises to the cytoplasm. It catalyses the reaction N(2)-formyl-N(1)-(5-phospho-beta-D-ribosyl)glycinamide + L-glutamine + ATP + H2O = 2-formamido-N(1)-(5-O-phospho-beta-D-ribosyl)acetamidine + L-glutamate + ADP + phosphate + H(+). Its pathway is purine metabolism; IMP biosynthesis via de novo pathway; 5-amino-1-(5-phospho-D-ribosyl)imidazole from N(2)-formyl-N(1)-(5-phospho-D-ribosyl)glycinamide: step 1/2. In terms of biological role, part of the phosphoribosylformylglycinamidine synthase complex involved in the purines biosynthetic pathway. Catalyzes the ATP-dependent conversion of formylglycinamide ribonucleotide (FGAR) and glutamine to yield formylglycinamidine ribonucleotide (FGAM) and glutamate. The FGAM synthase complex is composed of three subunits. PurQ produces an ammonia molecule by converting glutamine to glutamate. PurL transfers the ammonia molecule to FGAR to form FGAM in an ATP-dependent manner. PurS interacts with PurQ and PurL and is thought to assist in the transfer of the ammonia molecule from PurQ to PurL. The sequence is that of Phosphoribosylformylglycinamidine synthase subunit PurL from Limosilactobacillus reuteri (strain DSM 20016) (Lactobacillus reuteri).